A 568-amino-acid polypeptide reads, in one-letter code: Dihydroxy-acid dehydratase 1 (568 aa).

The interval 1 to 22 is disordered; that stretch reads MAEQTNTPDLKPRSRDVTDGLE. Residues 10–22 show a composition bias toward basic and acidic residues; sequence LKPRSRDVTDGLE. Cysteine 57 provides a ligand contact to [2Fe-2S] cluster. Aspartate 89 provides a ligand contact to Mg(2+). Cysteine 130 contacts [2Fe-2S] cluster. Residues aspartate 131 and lysine 132 each contribute to the Mg(2+) site. At lysine 132 the chain carries N6-carboxylysine. Cysteine 207 contacts [2Fe-2S] cluster. Position 458 (glutamate 458) interacts with Mg(2+). The active-site Proton acceptor is the serine 484.

Belongs to the IlvD/Edd family. In terms of assembly, homodimer. [2Fe-2S] cluster serves as cofactor. Requires Mg(2+) as cofactor.

The enzyme catalyses (2R)-2,3-dihydroxy-3-methylbutanoate = 3-methyl-2-oxobutanoate + H2O. It carries out the reaction (2R,3R)-2,3-dihydroxy-3-methylpentanoate = (S)-3-methyl-2-oxopentanoate + H2O. Its pathway is amino-acid biosynthesis; L-isoleucine biosynthesis; L-isoleucine from 2-oxobutanoate: step 3/4. It functions in the pathway amino-acid biosynthesis; L-valine biosynthesis; L-valine from pyruvate: step 3/4. Its function is as follows. Functions in the biosynthesis of branched-chain amino acids. Catalyzes the dehydration of (2R,3R)-2,3-dihydroxy-3-methylpentanoate (2,3-dihydroxy-3-methylvalerate) into 2-oxo-3-methylpentanoate (2-oxo-3-methylvalerate) and of (2R)-2,3-dihydroxy-3-methylbutanoate (2,3-dihydroxyisovalerate) into 2-oxo-3-methylbutanoate (2-oxoisovalerate), the penultimate precursor to L-isoleucine and L-valine, respectively. The polypeptide is Dihydroxy-acid dehydratase 1 (Nocardia farcinica (strain IFM 10152)).